Here is a 453-residue protein sequence, read N- to C-terminus: tRNA (guanine-N(7)-)-methyltransferase non-catalytic subunit TRM82 (453 aa).

Positions 69 to 99 (ENEEKGIKKSKTNEGNTIEKKHDAKIPVPGP) are disordered. 2 WD repeats span residues 103–143 (PIYS…NDNC) and 244–286 (GHKE…DEFD).

The protein belongs to the WD repeat TRM82 family. In terms of assembly, forms a heterodimer with the catalytic subunit TRM8.

Its subcellular location is the nucleus. The protein operates within tRNA modification; N(7)-methylguanine-tRNA biosynthesis. Functionally, required for the formation of N(7)-methylguanine at position 46 (m7G46) in tRNA. In the complex, it is required to stabilize and induce conformational changes of the catalytic subunit. The chain is tRNA (guanine-N(7)-)-methyltransferase non-catalytic subunit TRM82 from Vanderwaltozyma polyspora (strain ATCC 22028 / DSM 70294 / BCRC 21397 / CBS 2163 / NBRC 10782 / NRRL Y-8283 / UCD 57-17) (Kluyveromyces polysporus).